Consider the following 481-residue polypeptide: Pyruvate kinase (481 aa).

Arginine 33 provides a ligand contact to substrate. K(+)-binding residues include asparagine 35, serine 37, aspartate 67, and threonine 68. Asparagine 35–histidine 38 lines the ATP pocket. Arginine 74 and lysine 155 together coordinate ATP. Position 221 (glutamate 221) interacts with Mg(2+). Substrate is bound by residues glycine 244, aspartate 245, and threonine 277. Residue aspartate 245 participates in Mg(2+) binding.

This sequence belongs to the pyruvate kinase family. In terms of assembly, homotetramer. The cofactor is Mg(2+). Requires K(+) as cofactor.

It carries out the reaction pyruvate + ATP = phosphoenolpyruvate + ADP + H(+). It functions in the pathway carbohydrate degradation; glycolysis; pyruvate from D-glyceraldehyde 3-phosphate: step 5/5. The sequence is that of Pyruvate kinase (pyk) from Chlamydia muridarum (strain MoPn / Nigg).